We begin with the raw amino-acid sequence, 260 residues long: MTHQHPYHLVDQSPWPLTGAISALMMTSGLILWFHTNSNHLLLAGTILLLLTVINWWRDVIREATFQGSHTLPVNTGLRYGMILFITSEVCFFFAFFWAFFHSSLAPTVELGVSWPPTGISPINPFLVPLLNTAVLLSSGVTVTWAHHSILTQNRTEAIQGLFLTVILGIYFTGLQAWEYYDSPFTIADSVYGSSFFVATGFHGLHVLIGTTFLFICFLRLITFHFSNNHHFGFEAAAWYWHFVDVVWLFLYICICWWGS.

Transmembrane regions (helical) follow at residues 14-34 (PWPL…ILWF), 41-61 (LLLA…RDVI), 81-101 (GMIL…WAFF), 126-146 (FLVP…VTWA), 158-178 (AIQG…LQAW), 196-216 (FFVA…FLFI), and 238-258 (AWYW…ICWW).

Belongs to the cytochrome c oxidase subunit 3 family. Component of the cytochrome c oxidase (complex IV, CIV), a multisubunit enzyme composed of a catalytic core of 3 subunits and several supernumerary subunits. The complex exists as a monomer or a dimer and forms supercomplexes (SCs) in the inner mitochondrial membrane with ubiquinol-cytochrome c oxidoreductase (cytochrome b-c1 complex, complex III, CIII).

The protein resides in the mitochondrion inner membrane. The enzyme catalyses 4 Fe(II)-[cytochrome c] + O2 + 8 H(+)(in) = 4 Fe(III)-[cytochrome c] + 2 H2O + 4 H(+)(out). Component of the cytochrome c oxidase, the last enzyme in the mitochondrial electron transport chain which drives oxidative phosphorylation. The respiratory chain contains 3 multisubunit complexes succinate dehydrogenase (complex II, CII), ubiquinol-cytochrome c oxidoreductase (cytochrome b-c1 complex, complex III, CIII) and cytochrome c oxidase (complex IV, CIV), that cooperate to transfer electrons derived from NADH and succinate to molecular oxygen, creating an electrochemical gradient over the inner membrane that drives transmembrane transport and the ATP synthase. Cytochrome c oxidase is the component of the respiratory chain that catalyzes the reduction of oxygen to water. Electrons originating from reduced cytochrome c in the intermembrane space (IMS) are transferred via the dinuclear copper A center (CU(A)) of subunit 2 and heme A of subunit 1 to the active site in subunit 1, a binuclear center (BNC) formed by heme A3 and copper B (CU(B)). The BNC reduces molecular oxygen to 2 water molecules using 4 electrons from cytochrome c in the IMS and 4 protons from the mitochondrial matrix. This Patiria pectinifera (Starfish) protein is Cytochrome c oxidase subunit 3 (COIII).